A 292-amino-acid polypeptide reads, in one-letter code: Hydroxysqualene synthase (292 aa).

It belongs to the phytoene/squalene synthase family. HpnC subfamily.

It catalyses the reaction presqualene diphosphate + H2O = hydroxysqualene + diphosphate. It functions in the pathway secondary metabolite biosynthesis; hopanoid biosynthesis. Its function is as follows. Involved in the biosynthesis of the hopanoid precursor squalene (SQ) from farnesyl diphosphate (FPP). Catalyzes the second step, the conversion of presqualene diphosphate (PSPP) to hydroxysqualene (HSQ). This is Hydroxysqualene synthase from Sinorhizobium fredii (strain NBRC 101917 / NGR234).